Consider the following 704-residue polypeptide: Polyribonucleotide nucleotidyltransferase (704 aa).

2 residues coordinate Mg(2+): D488 and D494. One can recognise a KH domain in the interval 555–614 (PRITTLKINPEKIRDVIGKGGATIRALTEETGTTIELEDDGTVKIASANGDATKEAIRRI). The S1 motif domain occupies 624–692 (GTIYNGKVVR…RQGRVRLSMK (69 aa)).

Belongs to the polyribonucleotide nucleotidyltransferase family. In terms of assembly, component of the RNA degradosome, which is a multiprotein complex involved in RNA processing and mRNA degradation. The cofactor is Mg(2+).

It localises to the cytoplasm. The enzyme catalyses RNA(n+1) + phosphate = RNA(n) + a ribonucleoside 5'-diphosphate. In terms of biological role, involved in mRNA degradation. Catalyzes the phosphorolysis of single-stranded polyribonucleotides processively in the 3'- to 5'-direction. This Shewanella sediminis (strain HAW-EB3) protein is Polyribonucleotide nucleotidyltransferase.